The sequence spans 143 residues: Type II secretion system core protein G (143 aa).

The propeptide at 1-17 is leader sequence; that stretch reads MIKRSITRSPSRAGQAG. N-methylmethionine is present on M18. The chain crosses the membrane as a helical span at residues 18–38; the sequence is MSLLEIIIVIVLIGAVLTLVG.

The protein belongs to the GSP G family. Type II secretion system is composed of four main components: the outer membrane complex, the inner membrane complex, the cytoplasmic secretion ATPase and the periplasm-spanning pseudopilus. Forms homomultimers. Interacts with pseudopilin tip complex component XpsJ as well as XpsI and XcpH. Interacts with XpsN and secretin XpsD. In terms of processing, cleaved by the prepilin peptidase. Post-translationally, methylated by prepilin peptidase at the amino group of the N-terminal methionine once the leader sequence is cleaved.

The protein resides in the cell inner membrane. Functionally, core component of the type II secretion system required for the energy-dependent secretion of extracellular factors such as proteases and toxins from the periplasm. Pseudopilin (pilin-like) protein that polymerizes to form the pseudopilus. Further polymerization triggers pseudopilus growth. This chain is Type II secretion system core protein G (xpsG), found in Xanthomonas campestris pv. campestris (strain ATCC 33913 / DSM 3586 / NCPPB 528 / LMG 568 / P 25).